Consider the following 305-residue polypeptide: Methionyl-tRNA formyltransferase (305 aa).

A (6S)-5,6,7,8-tetrahydrofolate-binding site is contributed by 111–114 (SLLP).

It belongs to the Fmt family.

The catalysed reaction is L-methionyl-tRNA(fMet) + (6R)-10-formyltetrahydrofolate = N-formyl-L-methionyl-tRNA(fMet) + (6S)-5,6,7,8-tetrahydrofolate + H(+). Its function is as follows. Attaches a formyl group to the free amino group of methionyl-tRNA(fMet). The formyl group appears to play a dual role in the initiator identity of N-formylmethionyl-tRNA by promoting its recognition by IF2 and preventing the misappropriation of this tRNA by the elongation apparatus. This is Methionyl-tRNA formyltransferase from Helicobacter pylori (strain J99 / ATCC 700824) (Campylobacter pylori J99).